The following is a 585-amino-acid chain: Glutamate decarboxylase 2 (585 aa).

The segment at 1 to 24 is disordered; it reads MASPGSGFWSFGSEDGSADPENPG. Phosphoserine occurs at positions 3, 6, 10, and 13. S-palmitoyl cysteine attachment occurs at residues C30 and C45. Substrate is bound at residue 181 to 183; it reads QLS. N6-(pyridoxal phosphate)lysine is present on K396. Residue R558 participates in substrate binding.

This sequence belongs to the group II decarboxylase family. As to quaternary structure, homodimer. The cofactor is pyridoxal 5'-phosphate. Post-translationally, phosphorylated; which does not affect kinetic parameters or subcellular location. In terms of processing, palmitoylated; which is required for presynaptic clustering.

It is found in the cytoplasm. The protein localises to the cytosol. It localises to the cytoplasmic vesicle. Its subcellular location is the presynaptic cell membrane. The protein resides in the golgi apparatus membrane. It carries out the reaction L-glutamate + H(+) = 4-aminobutanoate + CO2. Catalyzes the production of GABA. The sequence is that of Glutamate decarboxylase 2 (Gad2) from Mus musculus (Mouse).